Reading from the N-terminus, the 434-residue chain is MRVLVLGSGVIGTASAYYLARQGFEVTVVDRQPAVAMETSFANAGQISPGYASPWAAPGVPLKAIKWLLERHAPLAIKLTGDVDQYLWMAQMLRNCTASRYAVNKERMVRLSEYSRDCLDELRAETGINYENRSLGTTQLFRTQAQVDAAAKDIAVLEQSGVPYELLDRDGIARVEPALAGVKDILAGALRLPNDQTGDCQLFTTKLADMALKLGVEFRFGQDIQRLDFAGDRINGVWIDGKLETADRYVLALGSYSPQMLKPLGIKAPVYPLKGYSLTVPITNGDMAPTSTILDETYKVAITRFDNRIRVGGMAEIAGFDLSLNPRRRETLEMIVNDLYPRGGDLSQASFWTGLRPATPDGTPIVGATAFRNLFLNTGHGTLGWTMACGSGRLLADLIARKKPQISAEGLDISRYGNSREVAKHGQTAPAHQQ.

3–17 (VLVLGSGVIGTASAY) is an FAD binding site.

Belongs to the DadA oxidoreductase family. It depends on FAD as a cofactor.

It catalyses the reaction a D-alpha-amino acid + A + H2O = a 2-oxocarboxylate + AH2 + NH4(+). The protein operates within amino-acid degradation; D-alanine degradation; NH(3) and pyruvate from D-alanine: step 1/1. In terms of biological role, oxidative deamination of D-amino acids. This is D-amino acid dehydrogenase from Pseudomonas putida (strain GB-1).